The primary structure comprises 155 residues: Mitochondrial import protein 1 (155 aa).

Belongs to the MIM1 family.

The protein resides in the mitochondrion outer membrane. Required for the assembly of the TOM (translocase of outer membrane) receptor complex, which is responsible for the recognition and translocation of cytosolically synthesized mitochondrial preproteins. In Eremothecium gossypii (strain ATCC 10895 / CBS 109.51 / FGSC 9923 / NRRL Y-1056) (Yeast), this protein is Mitochondrial import protein 1.